We begin with the raw amino-acid sequence, 228 residues long: PKHD-type hydroxylase XCV3086 (228 aa).

In terms of domain architecture, Fe2OG dioxygenase spans 78 to 180 (RIYPPLFNRY…RVACFFWTQS (103 aa)). Fe cation-binding residues include His-96, Asp-98, and His-161. Residue Arg-171 coordinates 2-oxoglutarate.

The cofactor is Fe(2+). Requires L-ascorbate as cofactor.

This chain is PKHD-type hydroxylase XCV3086, found in Xanthomonas euvesicatoria pv. vesicatoria (strain 85-10) (Xanthomonas campestris pv. vesicatoria).